The following is a 123-amino-acid chain: Ribosome-binding factor A (123 aa).

Belongs to the RbfA family. In terms of assembly, monomer. Binds 30S ribosomal subunits, but not 50S ribosomal subunits or 70S ribosomes.

Its subcellular location is the cytoplasm. Functionally, one of several proteins that assist in the late maturation steps of the functional core of the 30S ribosomal subunit. Associates with free 30S ribosomal subunits (but not with 30S subunits that are part of 70S ribosomes or polysomes). Required for efficient processing of 16S rRNA. May interact with the 5'-terminal helix region of 16S rRNA. The protein is Ribosome-binding factor A of Cupriavidus taiwanensis (strain DSM 17343 / BCRC 17206 / CCUG 44338 / CIP 107171 / LMG 19424 / R1) (Ralstonia taiwanensis (strain LMG 19424)).